Here is a 731-residue protein sequence, read N- to C-terminus: RNA-binding protein RMD9-like, mitochondrial (731 aa).

Residues 1-10 (MIRLAQQTQV) show a composition bias toward polar residues. Disordered stretches follow at residues 1 to 29 (MIRL…NSLT), 77 to 133 (GGNI…GNSI), and 590 to 630 (QNDR…FNNP). The span at 83–100 (NNNNHLAQNNSNNSNNHH) shows a compositional bias: low complexity. The span at 101 to 122 (NNNRNHHHNNNRNHHQNNHNHS) shows a compositional bias: basic residues. Ser-132 carries the post-translational modification Phosphoserine. Residues 598–617 (SNMNSTQISRTATPSPSLTP) show a composition bias toward polar residues.

The protein belongs to the RMD9 family. Monomer. Phosphorylated. Phosphorylation promotes binding to RNA.

It is found in the mitochondrion inner membrane. Its function is as follows. May be involved in the processing or stability of mitochondrial mRNAs. The chain is RNA-binding protein RMD9-like, mitochondrial from Saccharomyces cerevisiae (strain ATCC 204508 / S288c) (Baker's yeast).